The primary structure comprises 512 residues: Serine/threonine-protein kinase grp (512 aa).

The Protein kinase domain occupies 22-279; that stretch reads WTLAQTLGEG…LEKTLDHKWC (258 aa). Residues 28–36 and K51 each bind ATP; that span reads LGEGAYGEV. D143 functions as the Proton acceptor in the catalytic mechanism. A disordered region spans residues 335–360; that stretch reads PTMRSDDDFNVRLGSGRSKEDGGDRQ.

Belongs to the protein kinase superfamily. CAMK Ser/Thr protein kinase family. NIM1 subfamily. Phosphorylated in a MEI-41/ATR dependent manner in response to DNA damage or the presence of unreplicated DNA.

The protein resides in the nucleus. It carries out the reaction L-seryl-[protein] + ATP = O-phospho-L-seryl-[protein] + ADP + H(+). It catalyses the reaction L-threonyl-[protein] + ATP = O-phospho-L-threonyl-[protein] + ADP + H(+). Its function is as follows. Serine/threonine-protein kinase which is required for checkpoint-mediated cell cycle arrest and activation of DNA repair in response to the presence of DNA damage or unreplicated DNA. May also negatively regulate cell cycle progression during unperturbed cell cycles. May phosphorylate the CDC25 phosphatase stg, which promotes its degradation. This results in increased inhibitory tyrosine phosphorylation of Cdk1-cyclin complexes and consequent inhibition of cell cycle progression. The protein is Serine/threonine-protein kinase grp of Drosophila melanogaster (Fruit fly).